The primary structure comprises 201 residues: MADKDKKVKKKKAKEDAPAEEAPAAAAPAGDRQSSRGSRKAKRTGSNVFSMFSQKQVAEFKEAFQLMDHDKDGIIGKNDLRATFDSLGRLASEKELDEMVGEASGPINFTQLLTLFANRMSGGSDEDDVVINAFKTFDEEGKIDSERLRHALMTWGDKFSADEVDEAYDQMDIDDKGYIDTTKLIAMLTASAEEEEGGEAA.

A disordered region spans residues 1–48; it reads MADKDKKVKKKKAKEDAPAEEAPAAAAPAGDRQSSRGSRKAKRTGSNV. Positions 20–29 are enriched in low complexity; that stretch reads EEAPAAAAPA. S46 carries the post-translational modification Phosphoserine. 3 EF-hand domains span residues 55 to 90, 125 to 158, and 159 to 194; these read KQVA…LGRL, DEDD…WGDK, and FSAD…SAEE. Positions 68, 70, 72, and 79 each coordinate Ca(2+).

In terms of assembly, myosin is a hexamer of 2 heavy chains and 4 light chains.

The polypeptide is Myosin regulatory light chain 2 (Bombyx mori (Silk moth)).